The chain runs to 374 residues: Acid phosphatase-like protein XcAP-1 (374 aa).

The signal sequence occupies residues 1–17 (TTIILLIAFAAIQLSKA). Serotonin is bound at residue valine 25. Intrachain disulfides connect cysteine 144/cysteine 372, cysteine 165/cysteine 219, and cysteine 345/cysteine 349. Aspartate 245, aspartate 249, asparagine 271, and glutamine 283 together coordinate serotonin.

It belongs to the histidine acid phosphatase family.

Its subcellular location is the secreted. In terms of biological role, probably modulates blood feeding of fleas on vertebrate species by binding and sequestering different mediators involved in the host response. Binds biogenic amines: serotonin, adrenaline and noradrenaline. Binds leukotriene C4. Does not bind histamine, leukotriene B4, leukotriene D4, leukotriene E4, ADP, and stable analogs of thromboxane A2: U-46619 and cTXA2. This is Acid phosphatase-like protein XcAP-1 from Xenopsylla cheopis (Oriental rat flea).